Reading from the N-terminus, the 384-residue chain is Stress response protein bis1 (384 aa).

Disordered regions lie at residues M1–Q22 and S344–V384.

The protein belongs to the ESS2 family. Heterodimer with ish1.

The protein resides in the nucleus. Its subcellular location is the cytoplasm. The protein localises to the cytoskeleton. It is found in the spindle. Its function is as follows. Has a role in maintaining cell viability during stationary phase induced by stress response. May be involved in pre-mRNA splicing. This is Stress response protein bis1 (bis1) from Schizosaccharomyces pombe (strain 972 / ATCC 24843) (Fission yeast).